A 601-amino-acid polypeptide reads, in one-letter code: MKLTRDFPHNDTMAQWQPSDHKDAKVVGELFAHFGAEHFTVQTTRTGVPVVWLPRELLQDVVGFLRKLPAPFVMLYDLSATDERLRSHRDGLPQSDFTVFYHLISIDRNADVMLKVALAESDLHLPTITNHFPNANWYEREVWDLMGITFDGHPHLTRIMMPKSWQGHPLRKDYPARATEFDPFMLDAAKQDMEQENLLFKPEEWGLARGNENEDYMFLNLGPNHPSAHGAFRLVLQLDGEEVRNCVPDIGYHHRGAEKMGERQSWHSYIPYTDRVEYLGGVMNNLPYVLAVEKLAGIKVPQRVDMIRVMMAELFRIQSHLLFLGTYIQDVGAMTPVFFTFTDRQHIYTIIEAITGARMHPAWFRIGGVAHDLPKGWQRLVQDNLLSWLPKRLMDYEKAAMRNSILRGRTIGVAAYTTEQALAWGTTGAGLRATGLNFDVRKWRPYSGYEQFDFEVPVGSNGDAYDRATVRIEEIRQSMRIIEQCMNNMPEGPFKADHPLTTPPPKERTLQHIETLINHFLQVSWGPVMPAAESFQMIEATKGINSYYLTSDGSTMSYRTRIRTPSFAHLQQIPSVIKGSMVSDLIVYLGSIDFVMSDVDR.

The NADH dehydrogenase I subunit C stretch occupies residues 1–191 (MKLTRDFPHN…DPFMLDAAKQ (191 aa)). Residues 215–601 (DYMFLNLGPN…IDFVMSDVDR (387 aa)) are NADH dehydrogenase I subunit D.

It in the N-terminal section; belongs to the complex I 30 kDa subunit family. This sequence in the C-terminal section; belongs to the complex I 49 kDa subunit family. In terms of assembly, NDH-1 is composed of 13 different subunits. Subunits NuoB, CD, E, F, and G constitute the peripheral sector of the complex.

It localises to the cell inner membrane. It carries out the reaction a quinone + NADH + 5 H(+)(in) = a quinol + NAD(+) + 4 H(+)(out). In terms of biological role, NDH-1 shuttles electrons from NADH, via FMN and iron-sulfur (Fe-S) centers, to quinones in the respiratory chain. The immediate electron acceptor for the enzyme in this species is believed to be ubiquinone. Couples the redox reaction to proton translocation (for every two electrons transferred, four hydrogen ions are translocated across the cytoplasmic membrane), and thus conserves the redox energy in a proton gradient. This Shewanella oneidensis (strain ATCC 700550 / JCM 31522 / CIP 106686 / LMG 19005 / NCIMB 14063 / MR-1) protein is NADH-quinone oxidoreductase subunit C/D.